We begin with the raw amino-acid sequence, 283 residues long: Pantothenate synthetase (283 aa).

Position 26-33 (26-33) interacts with ATP; the sequence is MGNLHEGH. The active-site Proton donor is His33. Position 57 (Gln57) interacts with (R)-pantoate. Position 57 (Gln57) interacts with beta-alanine. Residue 144 to 147 coordinates ATP; the sequence is GKKD. Gln150 provides a ligand contact to (R)-pantoate. ATP is bound by residues Ile173 and 181 to 184; that span reads LSSR.

It belongs to the pantothenate synthetase family. Homodimer.

It is found in the cytoplasm. It carries out the reaction (R)-pantoate + beta-alanine + ATP = (R)-pantothenate + AMP + diphosphate + H(+). It participates in cofactor biosynthesis; (R)-pantothenate biosynthesis; (R)-pantothenate from (R)-pantoate and beta-alanine: step 1/1. Catalyzes the condensation of pantoate with beta-alanine in an ATP-dependent reaction via a pantoyl-adenylate intermediate. The sequence is that of Pantothenate synthetase from Polynucleobacter necessarius subsp. necessarius (strain STIR1).